We begin with the raw amino-acid sequence, 149 residues long: Transcriptional repressor NrdR (149 aa).

A zinc finger lies at 3-34 (CPFCSENDTKVIDSRLVADGHQVRRRRQCLAC). In terms of domain architecture, ATP-cone spans 49 to 139 (PKVIKSNGNR…VYRSFEDIRE (91 aa)).

Belongs to the NrdR family. Requires Zn(2+) as cofactor.

Negatively regulates transcription of bacterial ribonucleotide reductase nrd genes and operons by binding to NrdR-boxes. The protein is Transcriptional repressor NrdR of Vibrio parahaemolyticus serotype O3:K6 (strain RIMD 2210633).